We begin with the raw amino-acid sequence, 446 residues long: Histidine--tRNA ligase (446 aa).

It belongs to the class-II aminoacyl-tRNA synthetase family. As to quaternary structure, homodimer.

It is found in the cytoplasm. It catalyses the reaction tRNA(His) + L-histidine + ATP = L-histidyl-tRNA(His) + AMP + diphosphate + H(+). This is Histidine--tRNA ligase from Burkholderia lata (strain ATCC 17760 / DSM 23089 / LMG 22485 / NCIMB 9086 / R18194 / 383).